The following is a 396-amino-acid chain: Elongation factor Tu (396 aa).

In terms of domain architecture, tr-type G spans 10 to 206; the sequence is KPHVNVGTIG…TMDSYIPEPV (197 aa). Residues 19–26 form a G1 region; that stretch reads GHVDHGKT. Residue 19–26 participates in GTP binding; the sequence is GHVDHGKT. Thr26 contacts Mg(2+). Residues 60–64 form a G2 region; that stretch reads GITIS. The G3 stretch occupies residues 81–84; sequence DCPG. Residues 81–85 and 136–139 contribute to the GTP site; these read DCPGH and NKAD. The G4 stretch occupies residues 136–139; that stretch reads NKAD. Residues 174–176 form a G5 region; it reads SAL.

The protein belongs to the TRAFAC class translation factor GTPase superfamily. Classic translation factor GTPase family. EF-Tu/EF-1A subfamily. In terms of assembly, monomer.

The protein resides in the cytoplasm. The catalysed reaction is GTP + H2O = GDP + phosphate + H(+). Its function is as follows. GTP hydrolase that promotes the GTP-dependent binding of aminoacyl-tRNA to the A-site of ribosomes during protein biosynthesis. This chain is Elongation factor Tu, found in Legionella pneumophila (strain Lens).